The chain runs to 604 residues: Replication protein A 70 kDa DNA-binding subunit B (604 aa).

The segment at residues 170–256 (WTIKVRVTNK…QNDYEMTLNE (87 aa)) is a DNA-binding region (OB). Residues 468-488 (CKTCNKKVTEAMDSGYWCESC) form a C4-type zinc finger.

Belongs to the replication factor A protein 1 family. Heterotrimer of RPA1, RPA2 and RPA3 (canonical replication protein A complex).

It is found in the nucleus. Functionally, component of the replication protein A complex (RPA) required for DNA recombination, repair and replication. The activity of RPA is mediated by single-stranded DNA binding and protein interactions. Probably involved in repair of double-strand DNA breaks (DSBs) induced by genotoxic stresses. The chain is Replication protein A 70 kDa DNA-binding subunit B (RPA1B) from Arabidopsis thaliana (Mouse-ear cress).